The primary structure comprises 361 residues: Deoxyhypusine hydroxylase (361 aa).

HEAT-like PBS-type repeat units follow at residues 59-85, 94-120, 183-211, and 216-242; these read LKHELAYVLGQLLNTRALPTLSRVLEN, VRHEAAEALGAIGAEESLPILRKYMQD, QRYRAMFALRDFGAGSKEAVEALADGFRD, and FRHEIAYIFGQLSSPYSIPSLLSRLRD. Fe cation is bound by residues His61, Glu62, His96, and Glu97. Residues His218, Glu219, His251, and Glu252 each contribute to the Fe cation site.

This sequence belongs to the deoxyhypusine hydroxylase family. It depends on Fe(2+) as a cofactor.

Its subcellular location is the cytoplasm. It localises to the nucleus. It carries out the reaction [eIF5A protein]-deoxyhypusine + AH2 + O2 = [eIF5A protein]-hypusine + A + H2O. It participates in protein modification; eIF5A hypusination. Its function is as follows. Catalyzes the hydroxylation of the N(6)-(4-aminobutyl)-L-lysine intermediate to form hypusine, an essential post-translational modification only found in mature eIF-5A factor. This Cryptococcus neoformans var. neoformans serotype D (strain JEC21 / ATCC MYA-565) (Filobasidiella neoformans) protein is Deoxyhypusine hydroxylase.